The following is a 146-amino-acid chain: Monothiol glutaredoxin-5, mitochondrial (146 aa).

The region spanning 26-131 (RQALEQAVKE…KILKEINALA (106 aa)) is the Glutaredoxin domain. A glutathione-binding site is contributed by lysine 43. A [2Fe-2S] cluster-binding site is contributed by cysteine 51. Residues 83–87 (REGIK), isoleucine 95, and 108–109 (SD) each bind glutathione.

This sequence belongs to the glutaredoxin family. Monothiol subfamily. As to quaternary structure, homodimer. Interacts with ISA1 and ISA2.

It localises to the mitochondrion. Monothiol glutaredoxin involved in mitochondrial iron-sulfur (Fe/S) cluster transfer. Receives 2Fe/2S clusters from scaffold protein isu1 and mediates their transfer to apoproteins, to the 4Fe/FS cluster biosynthesis machinery, or export from mitochondrion. This chain is Monothiol glutaredoxin-5, mitochondrial, found in Schizosaccharomyces pombe (strain 972 / ATCC 24843) (Fission yeast).